The chain runs to 436 residues: UPF0597 protein YhaM (436 aa).

This sequence belongs to the UPF0597 family.

The chain is UPF0597 protein YhaM from Salmonella paratyphi A (strain ATCC 9150 / SARB42).